We begin with the raw amino-acid sequence, 706 residues long: Protein MAM3 (706 aa).

Residues 1–16 (MSFLPLRSRSRSGAPH) are Vacuolar-facing. The helical transmembrane segment at 17–37 (WVYIILYHIFTIPKIYSLPLL) threads the bilayer. The Cytoplasmic segment spans residues 38–65 (SGSHVLNSRDVADSGHSVGDEASVTTYY). In terms of domain architecture, CNNM transmembrane spans 57-240 (DEASVTTYYI…MGVERLTKDE (184 aa)). A helical membrane pass occupies residues 66 to 86 (IISIILVLLGGVFAGLTLGLM). Topologically, residues 87–120 (GQDEVYLKVISTSGSNSEKKLAKRVLDLISRGKH) are vacuolar. Residues 121–141 (WVLVTLLLSNVITNETLPIVL) traverse the membrane as a helical segment. Over 142 to 145 (DRCL) the chain is Cytoplasmic. Residues 146–166 (GGGWQAVVSSTILIVIFGEII) form a helical membrane-spanning segment. Residues 167–177 (PQSVCVKYGLQ) are Vacuolar-facing. Residues 178–198 (VGAFFCPFVLVLMYLMYPVAY) traverse the membrane as a helical segment. Residues 199-706 (PIATLLDYML…ANGSSSTIKR (508 aa)) are Cytoplasmic-facing. 2 consecutive CBS domains span residues 259–320 (MTPI…DCLP) and 321–386 (ISHF…IVDE). Disordered stretches follow at residues 421–495 (SHKE…ASNP), 515–540 (ITTHTPHSSKEPSPAPHSNDKSLSAE), and 557–597 (LHTQ…ENQN). The segment covering 433 to 445 (ESSPLLSPSNSNH) has biased composition (low complexity). Residues serine 439 and serine 447 each carry the phosphoserine modification. Over residues 472–495 (AVLSPTPQVTEHGTIIPSNLASNP) the composition is skewed to polar residues. Serine 527 carries the post-translational modification Phosphoserine. Over residues 566–575 (TQVTTSTKTT) the composition is skewed to low complexity. Over residues 576 to 597 (RNSPDSISIPNSGANHGNENQN) the composition is skewed to polar residues. A Phosphoserine modification is found at serine 603. Tyrosine 604 is modified (phosphotyrosine). At threonine 607 the chain carries Phosphothreonine. Serine 614 carries the phosphoserine modification. The disordered stretch occupies residues 626–706 (IGPAKDWDES…ANGSSSTIKR (81 aa)). Basic and acidic residues predominate over residues 630–639 (KDWDESKSEY). The segment covering 658 to 680 (SSSNASLFSSIKNKFKNENANNN) has biased composition (low complexity). Residues 681–706 (DRSNFTDSLSRTSNYDANGSSSTIKR) are compositionally biased toward polar residues.

This sequence belongs to the ACDP family.

Its subcellular location is the vacuole membrane. Functionally, involved in metal homeostasis and more specially in manganese sensitivity. The chain is Protein MAM3 (MAM3) from Saccharomyces cerevisiae (strain ATCC 204508 / S288c) (Baker's yeast).